Reading from the N-terminus, the 784-residue chain is DNA repair and recombination protein RAD54-like (784 aa).

Positions 2–9 (RRSLAPSQ) are required for chromatin remodeling, strand pairing activities and coupling of ATPase activity. At Thr-22 the chain carries Phosphothreonine. The Helicase ATP-binding domain maps to 169-344 (EGKKGNFNGC…FSLVNFVNPE (176 aa)). 182 to 189 (DEMGLGKT) lines the ATP pocket. The DEGH box signature appears at 295-298 (DEGH). Residues 501–658 (LLDFMLATIR…NNESAEKHFT (158 aa)) enclose the Helicase C-terminal domain. Residues 742-784 (QAIKESEETKQEAEDTSIPAKSKRKRSTTPESDDCNDEDFKGF) form a disordered region. Positions 745 to 754 (KESEETKQEA) are enriched in basic and acidic residues.

This sequence belongs to the SNF2/RAD54 helicase family. In terms of assembly, interacts (via N-terminus) with spn-A/Rad51.

It is found in the nucleus. In terms of biological role, involved in mitotic DNA repair and meiotic recombination. Functions in the recombinational DNA repair pathway. Essential for interhomolog gene conversion (GC), but may have a less important role in intersister GC than spn-A/Rad51. In the presence of DNA, spn-A/Rad51 enhances the ATPase activity of okr/Rad54. The chain is DNA repair and recombination protein RAD54-like from Drosophila willistoni (Fruit fly).